The primary structure comprises 347 residues: Quinolinate synthase (347 aa).

The iminosuccinate site is built by His47 and Ser68. Cys113 lines the [4Fe-4S] cluster pocket. Residues 139–141 and Ser156 each bind iminosuccinate; that span reads YAN. Cys200 contacts [4Fe-4S] cluster. Iminosuccinate-binding positions include 226 to 228 and Thr243; that span reads HPE. Cys297 is a [4Fe-4S] cluster binding site.

Belongs to the quinolinate synthase family. Type 1 subfamily. Requires [4Fe-4S] cluster as cofactor.

The protein resides in the cytoplasm. It carries out the reaction iminosuccinate + dihydroxyacetone phosphate = quinolinate + phosphate + 2 H2O + H(+). It functions in the pathway cofactor biosynthesis; NAD(+) biosynthesis; quinolinate from iminoaspartate: step 1/1. Functionally, catalyzes the condensation of iminoaspartate with dihydroxyacetone phosphate to form quinolinate. In Salmonella enteritidis PT4 (strain P125109), this protein is Quinolinate synthase.